The primary structure comprises 569 residues: Probable ABC transporter permease protein y4fN (569 aa).

A run of 13 helical transmembrane segments spans residues 10-30 (VFYWLGLIVIAWAVLTFLLVP), 68-88 (VWMTAATTLTVTIVGMFQVAV), 98-118 (GFLKIAFSTPLVFGGVVAAAG), 121-141 (FTYGPSGAITAALAALFPSLP), 145-165 (FIGWFGVLFAHTFLMTSFHFL), 196-216 (VVLPVILPTVLAVTLLTLITA), 247-267 (PDMAALLALLMGLVLMGLILL), 304-324 (LAYLLAAIYLMPVALIVLFSF), 363-383 (MSSIAVAVGLAITLFAVPIMV), 395-415 (ICFVLPWIIPTMLLAVGLIVA), 426-446 (LVLLGSYWLLPIGYVIFSLPL), 480-500 (VVLPLVAPTAILVAGMKFNNL), and 534-554 (AAVSLVYVTLIMAFSLAVILI). The region spanning 64 to 268 (LWNTVWMTAA…LVLMGLILLS (205 aa)) is the ABC transmembrane type-1 1 domain. In terms of domain architecture, ABC transmembrane type-1 2 spans 357 to 551 (FFNSMLMSSI…TLIMAFSLAV (195 aa)).

The protein belongs to the binding-protein-dependent transport system permease family. CysTW subfamily.

Its subcellular location is the cell inner membrane. In terms of biological role, probably part of the binding-protein-dependent transport system y4fNOP. Probably responsible for the translocation of the substrate across the membrane. The chain is Probable ABC transporter permease protein y4fN from Sinorhizobium fredii (strain NBRC 101917 / NGR234).